The primary structure comprises 412 residues: NAD-dependent dihydropyrimidine dehydrogenase subunit PreT (412 aa).

Glutamate 286 is a binding site for NAD(+).

It belongs to the NADH dehydrogenase family. Heterotetramer of 2 PreA and 2 PreT subunits.

It catalyses the reaction 5,6-dihydrouracil + NAD(+) = uracil + NADH + H(+). It carries out the reaction 5,6-dihydrothymine + NAD(+) = thymine + NADH + H(+). Functionally, involved in pyrimidine base degradation. Catalyzes physiologically the reduction of uracil to 5,6-dihydrouracil (DHU) by using NADH as a specific cosubstrate. It also catalyzes the reverse reaction and the reduction of thymine to 5,6-dihydrothymine (DHT). The chain is NAD-dependent dihydropyrimidine dehydrogenase subunit PreT (preT) from Escherichia coli O157:H7.